A 499-amino-acid chain; its full sequence is Aspartyl/glutamyl-tRNA(Asn/Gln) amidotransferase subunit B (499 aa).

This sequence belongs to the GatB/GatE family. GatB subfamily. In terms of assembly, heterotrimer of A, B and C subunits.

It carries out the reaction L-glutamyl-tRNA(Gln) + L-glutamine + ATP + H2O = L-glutaminyl-tRNA(Gln) + L-glutamate + ADP + phosphate + H(+). The enzyme catalyses L-aspartyl-tRNA(Asn) + L-glutamine + ATP + H2O = L-asparaginyl-tRNA(Asn) + L-glutamate + ADP + phosphate + 2 H(+). Its function is as follows. Allows the formation of correctly charged Asn-tRNA(Asn) or Gln-tRNA(Gln) through the transamidation of misacylated Asp-tRNA(Asn) or Glu-tRNA(Gln) in organisms which lack either or both of asparaginyl-tRNA or glutaminyl-tRNA synthetases. The reaction takes place in the presence of glutamine and ATP through an activated phospho-Asp-tRNA(Asn) or phospho-Glu-tRNA(Gln). The polypeptide is Aspartyl/glutamyl-tRNA(Asn/Gln) amidotransferase subunit B (Bifidobacterium longum (strain DJO10A)).